A 762-amino-acid chain; its full sequence is Homeobox-leucine zipper protein MERISTEM L1 (762 aa).

A disordered region spans residues 13–72; it reads MFDMTPKNSENDLGITGSHEEDFETKSGAEVTMENPLEEELQDPNQRPNKKKRYHRHTQR. Over residues 30–39 the composition is skewed to basic and acidic residues; it reads SHEEDFETKS. Residues 60-71 are compositionally biased toward basic residues; sequence PNKKKRYHRHTQ. The segment at residues 62 to 121 is a DNA-binding region (homeobox); sequence KKKRYHRHTQRQIQELESFFKECPHPDDKQRKELSRELSLEPLQVKFWFQNKRTQMKAQH. The stretch at 110 to 192 forms a coiled coil; the sequence is FQNKRTQMKA…DRISAIAAKY (83 aa). The region spanning 253–484 is the START domain; it reads SEADKPMIVE…LDRQCERLAS (232 aa).

This sequence belongs to the HD-ZIP homeobox family. Class IV subfamily. In terms of assembly, interacts with GAI/RGA2, RGA/RGA1/GRS, RGL2/SCL19 and PDF2. Interacts with AIL7/PLT7, ANT, BBM and AIL1.

Its subcellular location is the nucleus. Its function is as follows. Probable transcription factor involved in cell specification and pattern formation during embryogenesis. Binds to the L1 box DNA sequence 5'-TAAATG[CT]A-3'. Plays a role in maintaining the identity of L1 cells, possibly by interacting with their L1 box or other target-gene promoters; binds to the LIP1 gene promoter and stimulates its expression upon imbibition. Acts as a positive regulator of gibberellins (GAs)-regulated epidermal gene expression (e.g. LIP1, LIP2, LTP1, FDH and PDF1). Functionally redundant to PDF2. Seems to promote cell differentiation. In Arabidopsis thaliana (Mouse-ear cress), this protein is Homeobox-leucine zipper protein MERISTEM L1.